Here is a 449-residue protein sequence, read N- to C-terminus: MYRAKRAALSPKVKRRVGKYELGRTIGEGTFAKVRFAKNTENDEPVAIKILDKEKVQKHRLVEQIRREICTMKLVKHPNVVRLFEVMGSKARIFIVLEYVTGGELFEIIATNGRLKEEEARKYFQQLINAVDYCHSRGVYHRDLKLENLLLDASGNLKVSDFGLSALTEQVKADGLLHTTCGTPNYVAPEVIEDRGYDGAAADIWSCGVILYVLLAGFLPFEDDNIIALYKKISEAQFTCPSWFSTGAKKLITRILDPNPTTRITISQILEDPWFKKGYKPPVFDEKYETSFDDVDAAFGDSEDRHVKEETEDQPTSMNAFELISLNQALNLDNLFEAKKEYKRETRFTSQCPPKEIITKIEEAAKPLGFDIQKKNYKMRMENLKAGRKGNLNVATEVFQVAPSLHVVELKKAKGDTLEFQKFYRTLSTQLKDVVWKCDGEVEGNGAAA.

In terms of domain architecture, Protein kinase spans Y20–F275. Residues I26–V34 and K49 each bind ATP. D143 (proton acceptor) is an active-site residue. The activation loop stretch occupies residues D161–E190. The 25-residue stretch at D313–E337 folds into the NAF domain.

The protein belongs to the protein kinase superfamily. CAMK Ser/Thr protein kinase family. SNF1 subfamily. In terms of assembly, may interact with CBL3. Mn(2+) is required as a cofactor. In terms of processing, autophosphorylated. As to expression, highly expressed in leaf blade and leaf sheath, but not in other tissues.

The enzyme catalyses L-seryl-[protein] + ATP = O-phospho-L-seryl-[protein] + ADP + H(+). The catalysed reaction is L-threonyl-[protein] + ATP = O-phospho-L-threonyl-[protein] + ADP + H(+). Involved in cold stress tolerance. CIPK serine-threonine protein kinases interact with CBL proteins. Binding of a CBL protein to the regulatory NAF domain of CIPK protein lead to the activation of the kinase in a calcium-dependent manner. This Oryza sativa subsp. japonica (Rice) protein is CBL-interacting protein kinase 31 (CIPK31).